The primary structure comprises 371 residues: Putative 8-amino-7-oxononanoate synthase (371 aa).

Arg-21 is a binding site for substrate. 108-109 contacts pyridoxal 5'-phosphate; the sequence is GY. His-133 provides a ligand contact to substrate. Pyridoxal 5'-phosphate is bound by residues Ser-180, 205–208, and 234–237; these read DDAH and TLSK. An N6-(pyridoxal phosphate)lysine modification is found at Lys-237. A substrate-binding site is contributed by Thr-333.

This sequence belongs to the class-II pyridoxal-phosphate-dependent aminotransferase family. BioF subfamily. In terms of assembly, homodimer. Pyridoxal 5'-phosphate is required as a cofactor.

It carries out the reaction 6-carboxyhexanoyl-[ACP] + L-alanine + H(+) = (8S)-8-amino-7-oxononanoate + holo-[ACP] + CO2. It participates in cofactor biosynthesis; biotin biosynthesis. Its function is as follows. Catalyzes the decarboxylative condensation of pimeloyl-[acyl-carrier protein] and L-alanine to produce 8-amino-7-oxononanoate (AON), [acyl-carrier protein], and carbon dioxide. In Bacillus subtilis subsp. natto, this protein is Putative 8-amino-7-oxononanoate synthase (bioF).